We begin with the raw amino-acid sequence, 314 residues long: Olfactory receptor 5P67 (314 aa).

Residues 1–28 (MAFLEDGNHTAVTEFILLGLTDDPVLRV) lie on the Extracellular side of the membrane. A glycan (N-linked (GlcNAc...) asparagine) is linked at Asn-8. The chain crosses the membrane as a helical span at residues 29-49 (ILFTIILCIYLVTVSGNLSTI). Residues 50–57 (LLIRVSSQ) lie on the Cytoplasmic side of the membrane. A helical membrane pass occupies residues 58–78 (LHHPMYFFLSHVGSVDIGYSS). The Extracellular portion of the chain corresponds to 79 to 102 (SVTPNMLVNFLVEKHTIAYLGCGI). The cysteines at positions 100 and 192 are disulfide-linked. Residues 103–123 (QLSSAAFFGTAECFLLATMAY) traverse the membrane as a helical segment. At 124 to 136 (DRFVAICNPLLYS) the chain is on the cytoplasmic side. The chain crosses the membrane as a helical span at residues 137–157 (TKMSTQTCIQLVVGSYTGGIL). The Extracellular portion of the chain corresponds to 158-199 (NASFAIISFFSFLFCGPNRINHFYCDFAPLVELSCSDINVSV). A helical membrane pass occupies residues 200–220 (VITTIFSASVTIITVFVIAIS). The Cytoplasmic segment spans residues 221-240 (YTYILITILKMRSTEGRHKA). Residues 241-261 (FSTCTSYLTAVTLFYGTVTFI) traverse the membrane as a helical segment. Residues 262–274 (YVVPKSNYSTDQN) lie on the Extracellular side of the membrane. N-linked (GlcNAc...) asparagine glycosylation is present at Asn-268. A helical transmembrane segment spans residues 275–295 (KVASVFYIVVIPMLNPLIYSL). The Cytoplasmic portion of the chain corresponds to 296–314 (RNNDIKGALKRQLGKKTFS).

It belongs to the G-protein coupled receptor 1 family.

It localises to the cell membrane. Its function is as follows. Potential odorant receptor. The protein is Olfactory receptor 5P67 of Mus musculus (Mouse).